The following is a 486-amino-acid chain: Cardiolipin synthase A (486 aa).

2 helical membrane-spanning segments follow: residues 3–23 (TVYT…IAGV) and 38–58 (MAWL…YLAV). 2 PLD phosphodiesterase domains span residues 219–246 (MDLR…VDPR) and 399–426 (EGGL…DMRS). Active-site residues include histidine 224, lysine 226, aspartate 231, histidine 404, lysine 406, and aspartate 411.

Belongs to the phospholipase D family. Cardiolipin synthase subfamily. ClsA sub-subfamily.

The protein resides in the cell inner membrane. It catalyses the reaction 2 a 1,2-diacyl-sn-glycero-3-phospho-(1'-sn-glycerol) = a cardiolipin + glycerol. Catalyzes the reversible phosphatidyl group transfer from one phosphatidylglycerol molecule to another to form cardiolipin (CL) (diphosphatidylglycerol) and glycerol. The protein is Cardiolipin synthase A of Escherichia coli O7:K1 (strain IAI39 / ExPEC).